The chain runs to 569 residues: Potassium-transporting ATPase potassium-binding subunit (569 aa).

Transmembrane regions (helical) follow at residues 3–23 (LMEY…SPVL), 68–88 (AASL…VLML), 136–156 (VGLA…AVAV), 179–199 (VLYV…GQGV), 259–279 (LQML…GEAV), 284–304 (HAWT…LSLY), 384–404 (GLYG…LMVG), 422–442 (AMLA…VAAV), 490–510 (LALA…GVAG), and 534–554 (LLLT…ALAL).

Belongs to the KdpA family. In terms of assembly, the system is composed of three essential subunits: KdpA, KdpB and KdpC.

The protein resides in the cell inner membrane. Functionally, part of the high-affinity ATP-driven potassium transport (or Kdp) system, which catalyzes the hydrolysis of ATP coupled with the electrogenic transport of potassium into the cytoplasm. This subunit binds the periplasmic potassium ions and delivers the ions to the membrane domain of KdpB through an intramembrane tunnel. In Nitratidesulfovibrio vulgaris (strain DP4) (Desulfovibrio vulgaris), this protein is Potassium-transporting ATPase potassium-binding subunit.